The primary structure comprises 92 residues: Small ribosomal subunit protein uS19 (92 aa).

This sequence belongs to the universal ribosomal protein uS19 family.

Functionally, protein S19 forms a complex with S13 that binds strongly to the 16S ribosomal RNA. The chain is Small ribosomal subunit protein uS19 from Leptospira biflexa serovar Patoc (strain Patoc 1 / Ames).